The chain runs to 659 residues: Fructose-1,6-bisphosphatase class 3 (659 aa).

It belongs to the FBPase class 3 family. The cofactor is Mn(2+).

The enzyme catalyses beta-D-fructose 1,6-bisphosphate + H2O = beta-D-fructose 6-phosphate + phosphate. It participates in carbohydrate biosynthesis; gluconeogenesis. The sequence is that of Fructose-1,6-bisphosphatase class 3 from Clostridium botulinum (strain Alaska E43 / Type E3).